Here is a 204-residue protein sequence, read N- to C-terminus: N-(5'-phosphoribosyl)anthranilate isomerase (204 aa).

It belongs to the TrpF family.

The enzyme catalyses N-(5-phospho-beta-D-ribosyl)anthranilate = 1-(2-carboxyphenylamino)-1-deoxy-D-ribulose 5-phosphate. Its pathway is amino-acid biosynthesis; L-tryptophan biosynthesis; L-tryptophan from chorismate: step 3/5. The polypeptide is N-(5'-phosphoribosyl)anthranilate isomerase (Bacillus thuringiensis (strain Al Hakam)).